A 130-amino-acid chain; its full sequence is MAENQYYGTGRRKSSAARVFIKPGNGKIVINQRSLEQYFGRETARMVVRQPLELVDMVEKLDLYITVKGGGISGQAGAIRHGITRALIEYDESLRGELRKAGFVTRDARQVERKKVGLRKARRRPQFSKR.

It belongs to the universal ribosomal protein uS9 family.

In Salmonella paratyphi C (strain RKS4594), this protein is Small ribosomal subunit protein uS9.